A 469-amino-acid chain; its full sequence is 6-phosphofructo-2-kinase/fructose-2,6-bisphosphatase 4 (469 aa).

Positions 1–249 (MASPRELTQN…YYLMNIHVTP (249 aa)) are 6-phosphofructo-2-kinase. Ser-29 is modified (phosphoserine; by PKC). 46-54 (GLPARGKTY) provides a ligand contact to ATP. Positions 79 and 103 each coordinate beta-D-fructose 6-phosphate. The active site involves Asp-129. Residues Thr-131 and Arg-137 each coordinate beta-D-fructose 6-phosphate. The active site involves Cys-159. 168–173 (NIVQVK) is a binding site for ATP. Lys-173, Arg-194, and Tyr-198 together coordinate beta-D-fructose 6-phosphate. The tract at residues 250-469 (RSIYLCRHGE…EALVTVPAHQ (220 aa)) is fructose-2,6-bisphosphatase. Beta-D-fructose 2,6-bisphosphate is bound at residue Arg-256. His-257 functions as the Tele-phosphohistidine intermediate in the catalytic mechanism. Positions 263, 269, and 306 each coordinate beta-D-fructose 2,6-bisphosphate. Glu-326 (proton donor/acceptor) is an active-site residue. Beta-D-fructose 2,6-bisphosphate contacts are provided by Tyr-337, Arg-351, Lys-355, Tyr-366, Gln-392, and Arg-396. Position 348–351 (348–351 (FALR)) interacts with ATP. ATP-binding positions include 392–396 (QAVMR) and Tyr-428. Position 444 is a phosphothreonine; by PKC (Thr-444).

The protein in the C-terminal section; belongs to the phosphoglycerate mutase family. Homodimer. In terms of tissue distribution, testis.

It catalyses the reaction beta-D-fructose 2,6-bisphosphate + H2O = beta-D-fructose 6-phosphate + phosphate. The catalysed reaction is beta-D-fructose 6-phosphate + ATP = beta-D-fructose 2,6-bisphosphate + ADP + H(+). Its activity is regulated as follows. The most important regulatory mechanism of these opposing activities is by phosphorylation and dephosphorylation of the enzyme. Functionally, synthesis and degradation of fructose 2,6-bisphosphate. This Rattus norvegicus (Rat) protein is 6-phosphofructo-2-kinase/fructose-2,6-bisphosphatase 4 (Pfkfb4).